Consider the following 366-residue polypeptide: 3-dehydroquinate synthase (366 aa).

NAD(+)-binding positions include Asp69–Lys74, Gly103–Asp107, Thr127–Thr128, Lys140, and Lys149. Glu182, His245, and His262 together coordinate Zn(2+).

This sequence belongs to the sugar phosphate cyclases superfamily. Dehydroquinate synthase family. The cofactor is Co(2+). Zn(2+) serves as cofactor. NAD(+) is required as a cofactor.

Its subcellular location is the cytoplasm. It carries out the reaction 7-phospho-2-dehydro-3-deoxy-D-arabino-heptonate = 3-dehydroquinate + phosphate. It functions in the pathway metabolic intermediate biosynthesis; chorismate biosynthesis; chorismate from D-erythrose 4-phosphate and phosphoenolpyruvate: step 2/7. Catalyzes the conversion of 3-deoxy-D-arabino-heptulosonate 7-phosphate (DAHP) to dehydroquinate (DHQ). This is 3-dehydroquinate synthase from Pseudomonas fluorescens (strain Pf0-1).